The sequence spans 346 residues: tRNA pseudouridine synthase D (346 aa).

D83 (nucleophile) is an active-site residue. Residues 159–305 (GVPNYFGEQR…LKQERRALRV (147 aa)) form the TRUD domain.

Belongs to the pseudouridine synthase TruD family.

The catalysed reaction is uridine(13) in tRNA = pseudouridine(13) in tRNA. Responsible for synthesis of pseudouridine from uracil-13 in transfer RNAs. The chain is tRNA pseudouridine synthase D from Hydrogenovibrio crunogenus (strain DSM 25203 / XCL-2) (Thiomicrospira crunogena).